A 274-amino-acid polypeptide reads, in one-letter code: NADPH-dependent 7-cyano-7-deazaguanine reductase (274 aa).

80–82 (VES) is a binding site for substrate. 82–83 (SK) contacts NADPH. C181 serves as the catalytic Thioimide intermediate. D188 serves as the catalytic Proton donor. Residue 220–221 (HE) coordinates substrate. 249–250 (RG) is an NADPH binding site.

The protein belongs to the GTP cyclohydrolase I family. QueF type 2 subfamily. As to quaternary structure, homodimer.

Its subcellular location is the cytoplasm. It catalyses the reaction 7-aminomethyl-7-carbaguanine + 2 NADP(+) = 7-cyano-7-deazaguanine + 2 NADPH + 3 H(+). Its pathway is tRNA modification; tRNA-queuosine biosynthesis. Catalyzes the NADPH-dependent reduction of 7-cyano-7-deazaguanine (preQ0) to 7-aminomethyl-7-deazaguanine (preQ1). The polypeptide is NADPH-dependent 7-cyano-7-deazaguanine reductase (Paraburkholderia xenovorans (strain LB400)).